The chain runs to 89 residues: uncharacterized protein (89 aa).

This is an uncharacterized protein from Vaccinia virus (strain Copenhagen) (VACV).